Reading from the N-terminus, the 489-residue chain is 3-octaprenyl-4-hydroxybenzoate carboxy-lyase (489 aa).

N172 lines the Mn(2+) pocket. Residues 175–177, 189–191, and 194–195 contribute to the prenylated FMN site; these read IYR, RWL, and RG. Position 238 (E238) interacts with Mn(2+). Residue D287 is the Proton donor of the active site.

Belongs to the UbiD family. As to quaternary structure, homohexamer. Requires prenylated FMN as cofactor. It depends on Mn(2+) as a cofactor.

The protein localises to the cell membrane. It carries out the reaction a 4-hydroxy-3-(all-trans-polyprenyl)benzoate + H(+) = a 2-(all-trans-polyprenyl)phenol + CO2. Its pathway is cofactor biosynthesis; ubiquinone biosynthesis. In terms of biological role, catalyzes the decarboxylation of 3-octaprenyl-4-hydroxy benzoate to 2-octaprenylphenol, an intermediate step in ubiquinone biosynthesis. The chain is 3-octaprenyl-4-hydroxybenzoate carboxy-lyase from Salmonella arizonae (strain ATCC BAA-731 / CDC346-86 / RSK2980).